The sequence spans 21 residues: uncharacterized protein (21 aa).

This is an uncharacterized protein from Escherichia coli (strain K12).